A 198-amino-acid chain; its full sequence is Probable minor pilin MMP0709 (198 aa).

A propeptide spanning residues 1–5 (MSNRG) is cleaved from the precursor. A QXSXEXXXL motif is present at residues 6-14 (QLSIEMVIL).

The N-terminus is probably cleaved by the prepilin peptidase EppA, which recognizes the class III signal sequence.

It is found in the secreted. The protein localises to the cell surface. Its subcellular location is the fimbrium. The chain is Probable minor pilin MMP0709 from Methanococcus maripaludis (strain DSM 14266 / JCM 13030 / NBRC 101832 / S2 / LL).